Consider the following 396-residue polypeptide: Pre-mRNA-splicing regulator WTAP (396 aa).

Met-1 is modified (N-acetylmethionine). Residue Ser-14 is modified to Phosphoserine. Low complexity-rich tracts occupy residues 240 to 257 (QQQQ…TTAS), 278 to 291 (SNGS…SGSG), and 304 to 316 (PSSP…SSNS). The segment at 240 to 396 (QQQQSQASAP…SSVNVQGSVL (157 aa)) is disordered. 3 positions are modified to phosphoserine: Ser-305, Ser-306, and Ser-341. Over residues 340–356 (DSPTGSENSLTHQSNDT) the composition is skewed to polar residues. The residue at position 350 (Thr-350) is a Phosphothreonine. Residues 357–368 (DSSHDPQEEKAV) are compositionally biased toward basic and acidic residues. Residues 380 to 396 (HVQNGLDSSVNVQGSVL) are compositionally biased toward polar residues. Residue Ser-388 is modified to Phosphoserine.

Belongs to the fl(2)d family. As to quaternary structure, component of the WMM complex, a N6-methyltransferase complex composed of a catalytic subcomplex, named MAC, and of an associated subcomplex, named MACOM. The MAC subcomplex is composed of METTL3 and METTL14. The MACOM subcomplex is composed of WTAP, ZC3H13, CBLL1/HAKAI, VIRMA, and, in some cases of RBM15 (RBM15 or RBM15B). Interacts with WT1. Also a component of a MACOM-like complex, named WTAP complex, composed of WTAP, ZC3H13, CBLL1, VIRMA, RBM15, BCLAF1 and THRAP3. Ubiquitously expressed.

The protein localises to the nucleus speckle. It is found in the nucleus. The protein resides in the nucleoplasm. It localises to the cytoplasm. Its function is as follows. Associated component of the WMM complex, a complex that mediates N6-methyladenosine (m6A) methylation of RNAs, a modification that plays a role in the efficiency of mRNA splicing and RNA processing. Required for accumulation of METTL3 and METTL14 to nuclear speckle. Acts as a mRNA splicing regulator. Regulates G2/M cell-cycle transition by binding to the 3' UTR of CCNA2, which enhances its stability. Impairs WT1 DNA-binding ability and inhibits expression of WT1 target genes. The chain is Pre-mRNA-splicing regulator WTAP from Homo sapiens (Human).